We begin with the raw amino-acid sequence, 502 residues long: Arginine-specific demethylase JMJ22 (502 aa).

Positions 15 to 45 (KSKSKRLKLHQHEPESLFPEKEVEEEDEDEG) are disordered. Residues 24-35 (HQHEPESLFPEK) show a composition bias toward basic and acidic residues. The F-box domain maps to 80–126 (LGNLQILSDELVLDILGLLGANHLGVLATVTKSFYIFANHEPLWRNL). The JmjC domain occupies 279-439 (EKVPVLDSEY…NVLEFLKKPN (161 aa)). His324, Asp326, and His407 together coordinate Fe cation.

Belongs to the JARID1 histone demethylase family. Requires Fe(2+) as cofactor. Expressed in inflorescences, roots and siliques, and, at low levels, in leaves and stems.

It is found in the nucleus. The catalysed reaction is N(omega),N(omega)-dimethyl-L-arginyl-[protein] + 2-oxoglutarate + O2 = N(omega)-methyl-L-arginyl-[protein] + formaldehyde + succinate + CO2. Histone demethylase that demethylates 'Arg-3' (H4R3me) of histone H4 with a specific activity for H4R3me2. Involved in the positive regulation of gene expression. Together with JMJ20, positively regulates seed germination by promoting the removal of repressive histone arginine methylations (e.g. H4R3me2) at GA3ox1 and GA3ox2 to trigger gibberellic acid (GA) biosynthesis. In Arabidopsis thaliana (Mouse-ear cress), this protein is Arginine-specific demethylase JMJ22.